Here is a 594-residue protein sequence, read N- to C-terminus: MGKKSRVKTQKSGTGATASVSPKETLNLASELLQKCSSPAPGPGKEWEEYVQIRSLVEKIRKKQKGLSVTFDGKREDYFPDLMKWASENGASVEGFEMVSFKEEGFGLRATRDIKAEELFLWVPRKLLMTVESAKNSVLGPLYSQDRILQAMGNITLAFHLLCERADPNSFWQPYIQTLPSEYDTPLYFGEDEVRYLQSTQAIHDVFSQYKNTARQYAYFYKVIQTHPHANKLPLKDSFTYEDYRWAVSSVMTRQNQIPTEDGSRVTLALIPLWDMCNHTNGLITTGYNLEDDRCECVALQDFQAGEQIYIFYGTRSNAEFVIHSGFFFDNNSHDRVKIKLGVSKSDRLYAMKAEVLARAGIPTSSVFALHFTEPPISAQLLAFLRVFCMTEEELKEHLLGDNAIDRIFTLGNSEYPVSWDNEVKLWTFLEDRASLLLKTYKTNIEEDKSFLKNHDLSVRATMAIKLRLGEKEILEKAVKSAAANREYYRKQMEEGAPLPKYEESNPGLLEGGVVDSRLPLVLRNLEEEAGVQEALTLVEAVSRAKAVENGLINGENSIPNGTRLEKEDLNQEQSKRVTEDAKEPSDSTEEVKE.

The disordered stretch occupies residues 1-23; that stretch reads MGKKSRVKTQKSGTGATASVSPK. Polar residues predominate over residues 10 to 23; the sequence is QKSGTGATASVSPK. S-adenosyl-L-methionine contacts are provided by residues R75, 104–106, R254, 275–279, and 325–327; these read EGF, DMCNH, and SGF. An SET domain is found at 94–314; that stretch reads EGFEMVSFKE…AGEQIYIFYG (221 aa). The tract at residues 553-594 is disordered; that stretch reads INGENSIPNGTRLEKEDLNQEQSKRVTEDAKEPSDSTEEVKE. The segment covering 564–594 has biased composition (basic and acidic residues); sequence RLEKEDLNQEQSKRVTEDAKEPSDSTEEVKE.

The protein belongs to the class V-like SAM-binding methyltransferase superfamily. SETD3 actin-histidine methyltransferase family. Interacts with MYOD1. Phosphorylated by GSK3B, which is required for recognition by the SCF(FBXW7) complex and subsequent degradation. In terms of processing, ubiquitinated by the SCF(FBXW7) complex following phosphorylation by GSK3B, leading to its degradation by the proteasome.

It localises to the cytoplasm. It is found in the nucleus. The catalysed reaction is L-histidyl-[protein] + S-adenosyl-L-methionine = N(tele)-methyl-L-histidyl-[protein] + S-adenosyl-L-homocysteine + H(+). Protein-histidine N-methyltransferase that specifically mediates 3-methylhistidine (tele-methylhistidine) methylation of actin at 'His-73'. Histidine methylation of actin is required for smooth muscle contraction of the laboring uterus during delivery. Does not have protein-lysine N-methyltransferase activity and probably only catalyzes histidine methylation of actin. The chain is Actin-histidine N-methyltransferase from Rhinolophus ferrumequinum (Greater horseshoe bat).